The primary structure comprises 264 residues: tRNA pseudouridine synthase A (264 aa).

Asp51 serves as the catalytic Nucleophile. Substrate is bound at residue Tyr109.

It belongs to the tRNA pseudouridine synthase TruA family. As to quaternary structure, homodimer.

It catalyses the reaction uridine(38/39/40) in tRNA = pseudouridine(38/39/40) in tRNA. Functionally, formation of pseudouridine at positions 38, 39 and 40 in the anticodon stem and loop of transfer RNAs. The polypeptide is tRNA pseudouridine synthase A (Pseudoalteromonas translucida (strain TAC 125)).